Reading from the N-terminus, the 142-residue chain is Large ribosomal subunit protein uL16 (142 aa).

This sequence belongs to the universal ribosomal protein uL16 family. In terms of assembly, part of the 50S ribosomal subunit.

Its function is as follows. Binds 23S rRNA and is also seen to make contacts with the A and possibly P site tRNAs. The polypeptide is Large ribosomal subunit protein uL16 (Thermotoga maritima (strain ATCC 43589 / DSM 3109 / JCM 10099 / NBRC 100826 / MSB8)).